Reading from the N-terminus, the 344-residue chain is DNA fragmentation factor subunit beta (344 aa).

The CIDE-N domain maps to 7-83 (QPKCVKLRAL…LLTAGETWHG (77 aa)).

In terms of assembly, heterodimer of DFFA and DFFB. Interacts with H1-1.

Its subcellular location is the cytoplasm. The protein resides in the nucleus. With respect to regulation, inhibited by DFFA (DFF45). Functionally, nuclease that induces DNA fragmentation and chromatin condensation during apoptosis. Degrades naked DNA and induces apoptotic morphology. This Mus musculus (Mouse) protein is DNA fragmentation factor subunit beta (Dffb).